A 446-amino-acid polypeptide reads, in one-letter code: Transcriptional regulator STERILE APETALA (446 aa).

Over residues 1-10 the composition is skewed to low complexity; it reads MSTSSSSSDN. The tract at residues 1-32 is disordered; the sequence is MSTSSSSSDNGAGGSGGVFEAPSPSRPRRGAN.

As to expression, expressed in inflorescence and floral meristems, young floral organ primordia, and later in ovule primordia.

It is found in the nucleus. In terms of biological role, transcriptional regulator involved in the specification of floral identity. Acts as A class cadastral protein by repressing the C class floral homeotic gene AGAMOUS in the external flower organs in association with APETALA2 and other repressors. Is required to maintain floral meristem identity in concert with AGAMOUS. Also interacts with APETALA2 to ensure the normal development of ovule. This is Transcriptional regulator STERILE APETALA (SAP) from Arabidopsis thaliana (Mouse-ear cress).